Consider the following 520-residue polypeptide: MPQLSLSSLGLWPMAASPWLLLLLVGASWLLARILAWTYTFYDNCCRLRCFPQPPKRNWFLGHLGLIHSSEEGLLYTQSLACTFGDMCCWWVGPWHAIVRIFHPTYIKPVLFAPAAIVPKDKVFYSFLKPWLGDGLLLSAGEKWSRHRRMLTPAFHFNILKPYMKIFNESVNIMHAKWQLLASEGSARLDMFEHISLMTLDSLQKCVFSFDSHCQEKPSEYIAAILELSALVTKRHQQILLYIDFLYYLTPDGQRFRRACRLVHDFTDAVIQERRRTLPSQGVDDFLQAKAKSKTLDFIDVLLLSKDEDGKKLSDEDIRAEADTFMFEGHDTTASGLSWVLYHLAKHPEYQERCRQEVQELLKDREPKEIEWDDLAQLPFLTMCIKESLRLHPPVPAVSRCCTQDIVLPDGRVIPKGIICLISVFGTHHNPAVWPDPEVYDPFRFDPKNIKERSPLAFIPFSAGPRNCIGQAFAMAEMKVVLGLTLLRFRVLPDHTEPRRKPELVLRAEGGLWLRVEPLS.

Residues 11-31 form a helical membrane-spanning segment; sequence LWPMAASPWLLLLLVGASWLL. Residues glutamate 328 and cysteine 468 each contribute to the heme site.

The protein belongs to the cytochrome P450 family. It depends on heme as a cofactor. Selectively expressed in blood neutrophils and bone marrow cells. Coexpressed with CYP4F3B in prostate, ileum and trachea. As to expression, selectively expressed in liver and kidney. It is also the predominant CYP4F isoform in trachea and tissues of the gastrointestinal tract.

The protein resides in the endoplasmic reticulum membrane. It localises to the microsome membrane. The catalysed reaction is an organic molecule + reduced [NADPH--hemoprotein reductase] + O2 = an alcohol + oxidized [NADPH--hemoprotein reductase] + H2O + H(+). The enzyme catalyses leukotriene B4 + reduced [NADPH--hemoprotein reductase] + O2 = 20-hydroxy-leukotriene B4 + oxidized [NADPH--hemoprotein reductase] + H2O + H(+). It carries out the reaction 20-hydroxy-leukotriene B4 + reduced [NADPH--hemoprotein reductase] + O2 = 20-oxo-leukotriene B4 + oxidized [NADPH--hemoprotein reductase] + 2 H2O + H(+). It catalyses the reaction 20-oxo-leukotriene B4 + reduced [NADPH--hemoprotein reductase] + O2 = 20-carboxy-leukotriene B4 + oxidized [NADPH--hemoprotein reductase] + H2O + 2 H(+). The catalysed reaction is (5Z,8Z,11Z)-eicosatrienoate + reduced [NADPH--hemoprotein reductase] + O2 = 20-hydroxy-(5Z,8Z,11Z)-eicosatrienoate + oxidized [NADPH--hemoprotein reductase] + H2O + H(+). The enzyme catalyses (5Z,8Z,11Z,14Z)-eicosatetraenoate + reduced [NADPH--hemoprotein reductase] + O2 = 20-hydroxy-(5Z,8Z,11Z,14Z)-eicosatetraenoate + oxidized [NADPH--hemoprotein reductase] + H2O + H(+). It carries out the reaction (5Z,8Z,11Z,14Z,17Z)-eicosapentaenoate + reduced [NADPH--hemoprotein reductase] + O2 = 19-hydroxy-(5Z,8Z,11Z,14Z,17Z)-eicosapentaenoate + oxidized [NADPH--hemoprotein reductase] + H2O + H(+). It catalyses the reaction (5Z,8Z,11Z,14Z,17Z)-eicosapentaenoate + reduced [NADPH--hemoprotein reductase] + O2 = 20-hydroxy-(5Z,8Z,11Z,14Z,17Z)-eicosapentaenoate + oxidized [NADPH--hemoprotein reductase] + H2O + H(+). The catalysed reaction is (4Z,7Z,10Z,13Z,16Z,19Z)-docosahexaenoate + reduced [NADPH--hemoprotein reductase] + O2 = 21-hydroxy-(4Z,7Z,10Z,13Z,16Z,19Z)-docosahexaenoate + oxidized [NADPH--hemoprotein reductase] + H2O + H(+). The enzyme catalyses (4Z,7Z,10Z,13Z,16Z,19Z)-docosahexaenoate + reduced [NADPH--hemoprotein reductase] + O2 = 22-hydroxy-(4Z,7Z,10Z,13Z,16Z,19Z)-docosahexaenoate + oxidized [NADPH--hemoprotein reductase] + H2O + H(+). It carries out the reaction 8,9-epoxy-(5Z,11Z,14Z)-eicosatrienoate + reduced [NADPH--hemoprotein reductase] + O2 = 20-hydroxy-8,9-epoxy-(5Z,11Z,14Z)-eicosatrienoate + oxidized [NADPH--hemoprotein reductase] + H2O + H(+). It catalyses the reaction 11,12-epoxy-(5Z,8Z,14Z)-eicosatrienoate + reduced [NADPH--hemoprotein reductase] + O2 = 20-hydroxy-11,12-epoxy-(5Z,8Z,14Z)-eicosatrienoate + oxidized [NADPH--hemoprotein reductase] + H2O + H(+). The catalysed reaction is 14,15-epoxy-(5Z,8Z,11Z)-eicosatrienoate + reduced [NADPH--hemoprotein reductase] + O2 = 20-hydroxy-14,15-epoxy-(5Z,8Z,11Z)-eicosatrienoate + oxidized [NADPH--hemoprotein reductase] + H2O + H(+). The enzyme catalyses 12,13-epoxy-(9Z)-octadecenoate + reduced [NADPH--hemoprotein reductase] + O2 = 18-hydroxy-12,13-epoxy-(9Z)-octadecenoate + oxidized [NADPH--hemoprotein reductase] + H2O + H(+). It carries out the reaction 9,10-epoxy-(12Z)-octadecenoate + reduced [NADPH--hemoprotein reductase] + O2 = 18-hydroxy-9,10-epoxy-(12Z)-octadecenoate + oxidized [NADPH--hemoprotein reductase] + H2O + H(+). It catalyses the reaction 9,10-epoxyoctadecanoate + reduced [NADPH--hemoprotein reductase] + O2 = 18-hydroxy-9,10-epoxy-octadecanoate + oxidized [NADPH--hemoprotein reductase] + H2O + H(+). The catalysed reaction is (12R)-hydroxy-(9Z)-octadecenoate + reduced [NADPH--hemoprotein reductase] + O2 = (12R),18-dihydroxy-(9Z)-octadecenoate + oxidized [NADPH--hemoprotein reductase] + H2O + H(+). The enzyme catalyses 12-hydroxyoctadecanoate + reduced [NADPH--hemoprotein reductase] + O2 = 12,18-dihydroxyoctadecanoate + oxidized [NADPH--hemoprotein reductase] + H2O + H(+). It carries out the reaction 5-hydroxy-(6E,8Z,11Z,14Z)-eicosatetraenoate + reduced [NADPH--hemoprotein reductase] + O2 = 5,20-dihydroxy-(6E,8Z,11Z,14Z)-eicosatetraenoate + oxidized [NADPH--hemoprotein reductase] + H2O + H(+). It catalyses the reaction 8-hydroxy-(5Z,9E,11Z,14Z)-eicosatetraenoate + reduced [NADPH--hemoprotein reductase] + O2 = 8,20-dihydroxy-(5Z,9E,11Z,14Z)-eicosatetraenoate + oxidized [NADPH--hemoprotein reductase] + H2O + H(+). The catalysed reaction is 12-hydroxy-(5Z,8Z,10E,14Z)-eicosatetraenoate + reduced [NADPH--hemoprotein reductase] + O2 = 12,20-dihydroxy-(5Z,8Z,10E,14Z)-eicosatetraenoate + oxidized [NADPH--hemoprotein reductase] + H2O + H(+). The enzyme catalyses 5-hydroxy-(6E,8Z,11Z,14Z,17Z)-eicosapentaenoate + reduced [NADPH--hemoprotein reductase] + O2 = 5,20-dihydroxy-(6E,8Z,11Z,14Z,17Z)-eicosapentaenoate + oxidized [NADPH--hemoprotein reductase] + H2O + H(+). It carries out the reaction lipoxin A4 + reduced [NADPH--hemoprotein reductase] + O2 = 20-hydroxy-lipoxin A4 + oxidized [NADPH--hemoprotein reductase] + H2O + H(+). It catalyses the reaction lipoxin B4 + reduced [NADPH--hemoprotein reductase] + O2 = 20-hydroxy-lipoxin B4 + oxidized [NADPH--hemoprotein reductase] + H2O + H(+). The catalysed reaction is 22-hydroxydocosanoate + reduced [NADPH--hemoprotein reductase] + O2 = 22-oxodocosanoate + oxidized [NADPH--hemoprotein reductase] + 2 H2O + H(+). The enzyme catalyses 22-oxodocosanoate + reduced [NADPH--hemoprotein reductase] + O2 = docosanedioate + oxidized [NADPH--hemoprotein reductase] + H2O + 2 H(+). It carries out the reaction docosanoate + reduced [NADPH--hemoprotein reductase] + O2 = 22-hydroxydocosanoate + oxidized [NADPH--hemoprotein reductase] + H2O + H(+). It catalyses the reaction tetracosanoate + reduced [NADPH--hemoprotein reductase] + O2 = 24-hydroxytetracosanoate + oxidized [NADPH--hemoprotein reductase] + H2O + H(+). The catalysed reaction is hexacosanoate + reduced [NADPH--hemoprotein reductase] + O2 = 26-hydroxyhexacosanoate + oxidized [NADPH--hemoprotein reductase] + H2O + H(+). The enzyme catalyses 26-hydroxyhexacosanoate + reduced [NADPH--hemoprotein reductase] + O2 = 26-oxohexacosanoate + oxidized [NADPH--hemoprotein reductase] + 2 H2O + H(+). It carries out the reaction 26-oxohexacosanoate + reduced [NADPH--hemoprotein reductase] + O2 = hexacosanedioate + oxidized [NADPH--hemoprotein reductase] + H2O + 2 H(+). It catalyses the reaction 3-hydroxyoctadecanoate + reduced [NADPH--hemoprotein reductase] + O2 = 3,18-dihydroxyoctadecanoate + oxidized [NADPH--hemoprotein reductase] + H2O + H(+). The catalysed reaction is 3-hydroxyhexadecanoate + reduced [NADPH--hemoprotein reductase] + O2 = 3,16-dihydroxyhexadecanoate + oxidized [NADPH--hemoprotein reductase] + H2O + H(+). The protein operates within lipid metabolism; leukotriene B4 degradation. It participates in lipid metabolism; arachidonate metabolism. Its activity is regulated as follows. Inhibited by carbon monoxide (CO). Functionally, a cytochrome P450 monooxygenase involved in the metabolism of various endogenous substrates, including fatty acids and their oxygenated derivatives (oxylipins). Mechanistically, uses molecular oxygen inserting one oxygen atom into a substrate, and reducing the second into a water molecule, with two electrons provided by NADPH via cytochrome P450 reductase (CPR; NADPH-ferrihemoprotein reductase). May play a role in inactivation of pro-inflammatory and anti-inflammatory oxylipins during the resolution of inflammation. In terms of biological role, catalyzes predominantly the oxidation of the terminal carbon (omega-oxidation) of oxylipins in myeloid cells, displaying higher affinity for arachidonate metabolite leukotriene B4 (LTB4). Inactivates LTB4 via three successive oxidative transformations to 20-hydroxy-LTB4, then to 20-oxo-LTB4 and to 20-carboxy-LTB4. Has omega-hydroxylase activity toward long-chain fatty acid epoxides with preference for 8,9-epoxy-(5Z,11Z,14Z)-eicosatrienoate (EET) and 9,10-epoxyoctadecanoate. Omega-hydroxylates monohydroxy polyunsaturated fatty acids (PUFAs), including hydroxyeicosatetraenoates (HETEs) and hydroxyeicosapentaenoates (HEPEs), to dihydroxy compounds. Contributes to the degradation of saturated very long-chain fatty acids (VLCFAs) such as docosanoic acid, by catalyzing successive omega-oxidations to the corresponding dicarboxylic acid, thereby initiating chain shortening. Has low hydroxylase activity toward PUFAs. Catalyzes predominantly the oxidation of the terminal carbon (omega-oxidation) of polyunsaturated fatty acids (PUFAs). Participates in the conversion of arachidonic acid to 20-hydroxyeicosatetraenoic acid (20-HETE), a signaling molecule acting both as vasoconstrictive and natriuretic with overall effect on arterial blood pressure. Has high omega-hydroxylase activity toward other PUFAs, including eicosatrienoic acid (ETA), eicosapentaenoic acid (EPA) and docosahexaenoic acid (DHA). Can also catalyze the oxidation of the penultimate carbon (omega-1 oxidation) of PUFAs with lower efficiency. Contributes to the degradation of saturated very long-chain fatty acids (VLCFAs) such as docosanoic acid and hexacosanoic acid, by catalyzing successive omega-oxidations to the corresponding dicarboxylic acids, thereby initiating chain shortening. Omega-hydroxylates long-chain 3-hydroxy fatty acids, likely initiating the oxidative conversion to the corresponding 3-hydroxydicarboxylic fatty acids. Has omega-hydroxylase activity toward long-chain fatty acid epoxides with preference for 8,9-epoxy-(5Z,11Z,14Z)-eicosatrienoate (EET) and 9,10-epoxyoctadecanoate. The chain is Cytochrome P450 4F3 from Homo sapiens (Human).